The primary structure comprises 326 residues: ATP synthase gamma chain (326 aa).

The protein belongs to the ATPase gamma chain family. As to quaternary structure, F-type ATPases have 2 components, CF(1) - the catalytic core - and CF(0) - the membrane proton channel. CF(1) has five subunits: alpha(3), beta(3), gamma(1), delta(1), epsilon(1). CF(0) has three main subunits: a, b and c.

Its subcellular location is the cell membrane. In terms of biological role, produces ATP from ADP in the presence of a proton gradient across the membrane. The gamma chain is believed to be important in regulating ATPase activity and the flow of protons through the CF(0) complex. This is ATP synthase gamma chain from Rhodococcus jostii (strain RHA1).